Consider the following 237-residue polypeptide: Phosphoribosylaminoimidazole-succinocarboxamide synthase (237 aa).

Belongs to the SAICAR synthetase family.

It catalyses the reaction 5-amino-1-(5-phospho-D-ribosyl)imidazole-4-carboxylate + L-aspartate + ATP = (2S)-2-[5-amino-1-(5-phospho-beta-D-ribosyl)imidazole-4-carboxamido]succinate + ADP + phosphate + 2 H(+). The protein operates within purine metabolism; IMP biosynthesis via de novo pathway; 5-amino-1-(5-phospho-D-ribosyl)imidazole-4-carboxamide from 5-amino-1-(5-phospho-D-ribosyl)imidazole-4-carboxylate: step 1/2. In Listeria welshimeri serovar 6b (strain ATCC 35897 / DSM 20650 / CCUG 15529 / CIP 8149 / NCTC 11857 / SLCC 5334 / V8), this protein is Phosphoribosylaminoimidazole-succinocarboxamide synthase.